The chain runs to 445 residues: MTTILKSLPKGEKVGIAFSGGLDTSAALLWMKQKGARCYAYTANLGQPDEADYNEIPRKAQEFGAEKAVLVDCRTQLVHEGIAAIQSGAFHISTGGITYFNTTPLGRAVTGTMLVAAMKEDGVNIWGDGSTFKGNDIERFYRYGLLTNPSLRIYKPWLDQQFIDELGGRAEMSAFMTAQGFAYKMSAEKAYSTDSNLLGATHEAKDLESLDSGIKIVNPIMGVPFWREDCNVKAEKVVVRFEEGQPTALNGQTFTDPVALFLEANAIGGRHGLGMSDQIENRIIEAKSRGIYEAPGMALLHIAYERLVTGIHNEDTIEQYRISGMRLGRLLYQGRWFDSQALMLRETAQRWVARAVTGEVTLELRRGNDYSILNTESPNLTYAPERLSMEKVEDAAFTPADRIGQLTMRNLDIADTRTKLKLYTDTGLLSGSEGSQIFRLENDKG.

Residues 17 to 25 (AFSGGLDTS) and Ala-43 contribute to the ATP site. Residue Tyr-99 coordinates L-citrulline. ATP is bound by residues Gly-129 and Thr-131. Thr-131, Asn-135, and Asp-136 together coordinate L-aspartate. Position 135 (Asn-135) interacts with L-citrulline. Asp-136 lines the ATP pocket. Residues Arg-139 and Ser-192 each contribute to the L-citrulline site. Asp-194 provides a ligand contact to ATP. L-citrulline contacts are provided by Thr-201, Glu-203, and Glu-280.

The protein belongs to the argininosuccinate synthase family. Type 2 subfamily. Homotetramer.

The protein localises to the cytoplasm. The catalysed reaction is L-citrulline + L-aspartate + ATP = 2-(N(omega)-L-arginino)succinate + AMP + diphosphate + H(+). The protein operates within amino-acid biosynthesis; L-arginine biosynthesis; L-arginine from L-ornithine and carbamoyl phosphate: step 2/3. The polypeptide is Argininosuccinate synthase (argG) (Bradyrhizobium diazoefficiens (strain JCM 10833 / BCRC 13528 / IAM 13628 / NBRC 14792 / USDA 110)).